A 672-amino-acid chain; its full sequence is Tubulin--tyrosine ligase-like protein 12 (672 aa).

Residues 332-670 (KIKIFLQIFA…LDEIDPTKVT (339 aa)) form the TTL domain. ATP contacts are provided by residues 480–483 (CEYI), Lys-499, and Asp-501.

Belongs to the tubulin--tyrosine ligase family.

Its function is as follows. Regulates microtubule dynamics in uterine muscle cells. The protein is Tubulin--tyrosine ligase-like protein 12 of Caenorhabditis briggsae.